Reading from the N-terminus, the 200-residue chain is Dephospho-CoA kinase (200 aa).

The DPCK domain occupies 3-200; sequence VIGLTGGIGS…KKYMTLAQGS (198 aa). ATP is bound at residue 11 to 16; the sequence is GSGKTS.

Belongs to the CoaE family.

Its subcellular location is the cytoplasm. The enzyme catalyses 3'-dephospho-CoA + ATP = ADP + CoA + H(+). Its pathway is cofactor biosynthesis; coenzyme A biosynthesis; CoA from (R)-pantothenate: step 5/5. Catalyzes the phosphorylation of the 3'-hydroxyl group of dephosphocoenzyme A to form coenzyme A. This is Dephospho-CoA kinase from Nitrosospira multiformis (strain ATCC 25196 / NCIMB 11849 / C 71).